The primary structure comprises 271 residues: Short-chain dehydrogenase/reductase SAT3 (271 aa).

Residues Ser17, Asp40, and Asn67 each contribute to the NADP(+) site. Catalysis depends on Ser153, which acts as the Proton donor. Positions 168, 172, and 203 each coordinate NADP(+). Tyr168 (proton acceptor) is an active-site residue. Lys172 (lowers pKa of active site Tyr) is an active-site residue.

This sequence belongs to the short-chain dehydrogenases/reductases (SDR) family.

It participates in mycotoxin biosynthesis. Short-chain dehydrogenase/reductase; part of the satratoxin SC1 cluster involved in the biosynthesis of satratoxins, trichothecene mycotoxins that are associated with human food poisonings. Satratoxins are suggested to be made by products of multiple gene clusters (SC1, SC2 and SC3) that encode 21 proteins in all, including polyketide synthases, acetyltransferases, and other enzymes expected to modify the trichothecene skeleton. SC1 encodes 10 proteins, SAT1 to SAT10. The largest are SAT8, which encodes a putative polyketide synthase (PKS) with a conventional non-reducing architecture, and SAT10, a putative protein containing four ankyrin repeats and thus may be involved in protein scaffolding. The putative short-chain reductase SAT3 may assist the PKS in some capacity. SAT6 contains a secretory lipase domain and acts probably as a trichothecene esterase. SAT5 encodes a putative acetyltransferase, and so, with SAT6, may affect endogenous protection from toxicity. The probable transcription factor SAT9 may regulate the expression of the SC1 cluster. SC2 encodes proteins SAT11 to SAT16, the largest of which encodes the putative reducing PKS SAT13. SAT11 is a cytochrome P450 monooxygenase, while SAT14 and SAT16 are probable acetyltransferases. The SC2 cluster may be regulated by the transcription factor SAT15. SC3 is a small cluster that encodes 5 proteins, SAT17 to SAT21. SAT21 is a putative MFS-type transporter which may have a role in exporting secondary metabolites. The four other proteins putatively encoded in SC3 include the taurine hydroxylase-like protein SAT17, the O-methyltransferase SAT18, the acetyltransferase SAT19, and the Cys6-type zinc finger SAT20, the latter being probably involved in regulation of SC3 expression. The protein is Short-chain dehydrogenase/reductase SAT3 of Stachybotrys chartarum (strain CBS 109288 / IBT 7711) (Toxic black mold).